A 617-amino-acid chain; its full sequence is Electron transfer flavoprotein-ubiquinone oxidoreductase, mitochondrial (617 aa).

The transit peptide at Met-1 to Trp-33 directs the protein to the mitochondrion. Residue Val-71–Ala-85 coordinates FAD. The residue at position 96 (Lys-96) is an N6-acetyllysine. An intramembrane segment occupies Ile-109–Asp-130. N6-acetyllysine is present on residues Lys-132 and Lys-223. A ubiquinone is bound by residues Gly-305 and Gly-306. Lys-357 carries the post-translational modification N6-acetyllysine. Residues Ile-428–Glu-447 lie within the membrane without spanning it. The residue at position 551 (Ser-551) is a Phosphoserine. [4Fe-4S] cluster is bound by residues Cys-561, Cys-586, Cys-589, and Cys-592. The 4Fe-4S ferredoxin-type domain maps to Phe-577 to Pro-606.

The protein belongs to the ETF-QO/FixC family. As to quaternary structure, monomer. [4Fe-4S] cluster serves as cofactor. FAD is required as a cofactor.

It is found in the mitochondrion inner membrane. It catalyses the reaction a ubiquinone + reduced [electron-transfer flavoprotein] = a ubiquinol + oxidized [electron-transfer flavoprotein] + H(+). Accepts electrons from ETF and reduces ubiquinone. The sequence is that of Electron transfer flavoprotein-ubiquinone oxidoreductase, mitochondrial (ETFDH) from Bos taurus (Bovine).